A 475-amino-acid polypeptide reads, in one-letter code: tRNA modification GTPase MnmE (475 aa).

The (6S)-5-formyl-5,6,7,8-tetrahydrofolate site is built by Arg-24, Glu-81, and Lys-124. Residues 220-397 (GLSVVLAGQP…LRKELLRLVG (178 aa)) form the TrmE-type G domain. Asn-230 contributes to the K(+) binding site. GTP is bound by residues 230–235 (NVGKSS), 249–255 (TPIAGTT), 274–277 (DTAG), and 378–380 (SAR). Residue Ser-234 participates in Mg(2+) binding. K(+) is bound by residues Thr-249, Ile-251, and Thr-254. Residue Thr-255 coordinates Mg(2+). Lys-475 is a binding site for (6S)-5-formyl-5,6,7,8-tetrahydrofolate.

It belongs to the TRAFAC class TrmE-Era-EngA-EngB-Septin-like GTPase superfamily. TrmE GTPase family. Homodimer. Heterotetramer of two MnmE and two MnmG subunits. The cofactor is K(+).

The protein resides in the cytoplasm. Functionally, exhibits a very high intrinsic GTPase hydrolysis rate. Involved in the addition of a carboxymethylaminomethyl (cmnm) group at the wobble position (U34) of certain tRNAs, forming tRNA-cmnm(5)s(2)U34. The protein is tRNA modification GTPase MnmE of Cupriavidus pinatubonensis (strain JMP 134 / LMG 1197) (Cupriavidus necator (strain JMP 134)).